Reading from the N-terminus, the 280-residue chain is DNA repair protein XRCC2 (280 aa).

Phosphoserine is present on Ser10.

Belongs to the RecA family. RAD51 subfamily. Interacts with RAD51D. Part of the BCDX2 complex consisting of RAD51B, RAD51C, RAD51D and XRCC2; the complex has a ring-like structure arranged into a flat disk around a central channel. In the absence of DNA, the BCDX2 subcomplex XRCC2:RAD51D formed a multimeric ring structure; in the presence of single-stranded DNA it formed a filamentous structure with the ssDNA.

It localises to the nucleus. The protein resides in the cytoplasm. The protein localises to the cytoskeleton. Its subcellular location is the microtubule organizing center. It is found in the centrosome. Functionally, involved in the homologous recombination repair (HRR) pathway of double-stranded DNA, thought to repair chromosomal fragmentation, translocations and deletions. Part of the RAD51 paralog protein complex BCDX2 which acts in the BRCA1-BRCA2-dependent HR pathway. Upon DNA damage, BCDX2 acts downstream of BRCA2 recruitment and upstream of RAD51 recruitment. BCDX2 binds predominantly to the intersection of the four duplex arms of the Holliday junction and to junction of replication forks. The BCDX2 complex was originally reported to bind single-stranded DNA, single-stranded gaps in duplex DNA and specifically to nicks in duplex DNA. The protein is DNA repair protein XRCC2 (XRCC2) of Homo sapiens (Human).